The sequence spans 126 residues: Protein HEAT-INDUCED TAS1 TARGET 3 (126 aa).

Belongs to the heat induced plant HTT protein family. Expressed in seedlings, leaves, stems, inflorescences and siliques.

It is found in the cytoplasm. Its subcellular location is the nucleus. Functionally, mediates both basal and acquired thermotolerance. The sequence is that of Protein HEAT-INDUCED TAS1 TARGET 3 from Arabidopsis thaliana (Mouse-ear cress).